The following is a 624-amino-acid chain: tRNA uridine 5-carboxymethylaminomethyl modification enzyme MnmG (624 aa).

FAD-binding positions include 13-18 (GGGHAG), Val125, and Ser180. 273–287 (GPRYCPSIEDKIVRF) is an NAD(+) binding site. Position 370 (Gln370) interacts with FAD.

The protein belongs to the MnmG family. Homodimer. Heterotetramer of two MnmE and two MnmG subunits. FAD is required as a cofactor.

The protein localises to the cytoplasm. In terms of biological role, NAD-binding protein involved in the addition of a carboxymethylaminomethyl (cmnm) group at the wobble position (U34) of certain tRNAs, forming tRNA-cmnm(5)s(2)U34. This chain is tRNA uridine 5-carboxymethylaminomethyl modification enzyme MnmG, found in Legionella pneumophila (strain Corby).